Consider the following 277-residue polypeptide: Phosphoenolpyruvate synthase regulatory protein (277 aa).

An ADP-binding site is contributed by 157-164 (GVSRCGKT).

The protein belongs to the pyruvate, phosphate/water dikinase regulatory protein family. PSRP subfamily.

The enzyme catalyses [pyruvate, water dikinase] + ADP = [pyruvate, water dikinase]-phosphate + AMP + H(+). It carries out the reaction [pyruvate, water dikinase]-phosphate + phosphate + H(+) = [pyruvate, water dikinase] + diphosphate. Bifunctional serine/threonine kinase and phosphorylase involved in the regulation of the phosphoenolpyruvate synthase (PEPS) by catalyzing its phosphorylation/dephosphorylation. This chain is Phosphoenolpyruvate synthase regulatory protein, found in Escherichia coli O1:K1 / APEC.